An 87-amino-acid chain; its full sequence is UPF0335 protein Avi_3695 (87 aa).

Belongs to the UPF0335 family.

This is UPF0335 protein Avi_3695 from Allorhizobium ampelinum (strain ATCC BAA-846 / DSM 112012 / S4) (Agrobacterium vitis (strain S4)).